Here is a 679-residue protein sequence, read N- to C-terminus: Protein white (679 aa).

Positions 1 to 34 (MGQEDQEVLIRGGKATSTSAESLNNNNEQPYEQS) are disordered. The segment covering 15-34 (ATSTSAESLNNNNEQPYEQS) has biased composition (polar residues). An ABC transporter domain is found at 84 to 332 (NRVKGVFCNE…FSYIGATCPT (249 aa)). 121-128 (GSSGAGKT) contacts ATP. 5 consecutive transmembrane segments (helical) span residues 427 to 445 (LLQTTMVAVLIGLIFLGQQ), 457 to 477 (AIFLFLTNMTFQNSFATITVF), 507 to 525 (LPLFLVVPFLFTAIAYPLI), 534 to 555 (FFTALALVTLVANVSTSFGYLI), and 568 to 586 (VGPPVIIPFLLFGGFFLNS). N-linked (GlcNAc...) asparagine glycosylation is found at Asn628 and Asn643. A helical membrane pass occupies residues 651–670 (FDFIGLALLIVGFRISAYIA).

Belongs to the ABC transporter superfamily. ABCG family. Eye pigment precursor importer (TC 3.A.1.204) subfamily.

It localises to the membrane. May be part of a membrane-spanning permease system necessary for the transport of pigment precursors into pigment cells responsible for eye color. The protein is Protein white (W) of Ceratitis capitata (Mediterranean fruit fly).